The primary structure comprises 620 residues: Membrane protein insertase YidC (620 aa).

Residues 7-27 traverse the membrane as a helical segment; sequence NYLIAIALSVMVVLGWQFFYM. Low complexity predominate over residues 37–58; sequence AEQAQQAQQAKTPATQATPGAA. Residues 37-77 are disordered; sequence AEQAQQAQQAKTPATQATPGAAVNGALPGQTQASATTSRED. The next 4 membrane-spanning stretches (helical) occupy residues 399–419, 469–489, 514–534, and 560–580; these read FGVAILLTTIAVKLLFFPLAS, WPLLLQIPVFFALYKVIYITI, LFGLLPFESPAMLHLGIWPII, and WMPLVFTFMLGSFPAGLVIYW.

This sequence belongs to the OXA1/ALB3/YidC family. Type 1 subfamily. As to quaternary structure, interacts with the Sec translocase complex via SecD. Specifically interacts with transmembrane segments of nascent integral membrane proteins during membrane integration.

It localises to the cell inner membrane. Functionally, required for the insertion and/or proper folding and/or complex formation of integral membrane proteins into the membrane. Involved in integration of membrane proteins that insert both dependently and independently of the Sec translocase complex, as well as at least some lipoproteins. Aids folding of multispanning membrane proteins. The protein is Membrane protein insertase YidC of Allorhizobium ampelinum (strain ATCC BAA-846 / DSM 112012 / S4) (Agrobacterium vitis (strain S4)).